A 370-amino-acid chain; its full sequence is Cap-specific mRNA (nucleoside-2'-O-)-methyltransferase 1 (370 aa).

In terms of domain architecture, RrmJ-type SAM-dependent 2'-O-MTase spans 87–294 (AFRNRAGHKL…ERYLVCIGFI (208 aa)). 2 residues coordinate S-adenosyl-L-methionine: glycine 130 and aspartate 207. Residue lysine 248 is the Proton acceptor of the active site.

Component of a complex composed of CBF5, GAR1, NHP2, MTR1, NOP10 and Tb11.01.8210.

It is found in the nucleus. It catalyses the reaction a 5'-end (N(7)-methyl 5'-triphosphoguanosine)-ribonucleoside in mRNA + S-adenosyl-L-methionine = a 5'-end (N(7)-methyl 5'-triphosphoguanosine)-(2'-O-methyl-ribonucleoside) in mRNA + S-adenosyl-L-homocysteine + H(+). Functionally, S-adenosyl-L-methionine-dependent methyltransferase that mediates RNA cap1 2'-O-ribose methylation to the 5'-cap structure of spliced leader and U1 small nuclear RNAs. Methylates the ribose of the first nucleotide of a m(7)GpppG-capped RNA to produce m(7)GpppNmp (cap1). Cap1 modification is linked to higher levels of translation. Recognizes a guanosine cap on RNA independent of its N(7) methylation status. The polypeptide is Cap-specific mRNA (nucleoside-2'-O-)-methyltransferase 1 (MTR1) (Trypanosoma brucei brucei (strain 927/4 GUTat10.1)).